A 384-amino-acid chain; its full sequence is MSTLVQCGYFERGQCQSCRHIKLPMAQQLAAKTQELQQLLAPFVDNAEAQFLPPVVGDSSGFRNKAKMVVLGAAHAPVLGIVSPSGEAVSLCDCLLYPADMQALLHRLERFVQQAGIPPYRVDKAKGELKFILLTRSQVRGEYMLRFVLRSRDAIARIERELPALMAEYPQIKVVSVNLQPIHMAILEGEEEIFLTENTRLEERFNDVPLFIRPKSFFQTNPQVAAKLYQTAREWVADFAPASLWDLFCGVGGFGLHCAAKDIPLTGIEIEAEAIACAKMSAQLMGLDKVQFMALDSTDFAKGDAAQTKPELIIVNPPRRGIGESLCHSLSEFAPKAILYSSCNPKTLAKDLGHIRGYRLTKVQLFDLFPHSDHFEVLALLVKD.

Residues cysteine 7, cysteine 15, cysteine 18, and cysteine 94 each coordinate [4Fe-4S] cluster. S-adenosyl-L-methionine is bound by residues glutamine 219, phenylalanine 248, glutamate 269, and asparagine 316. Cysteine 343 (nucleophile) is an active-site residue.

It belongs to the class I-like SAM-binding methyltransferase superfamily. RNA M5U methyltransferase family. RlmC subfamily.

The catalysed reaction is uridine(747) in 23S rRNA + S-adenosyl-L-methionine = 5-methyluridine(747) in 23S rRNA + S-adenosyl-L-homocysteine + H(+). Its function is as follows. Catalyzes the formation of 5-methyl-uridine at position 747 (m5U747) in 23S rRNA. This chain is 23S rRNA (uracil(747)-C(5))-methyltransferase RlmC, found in Shewanella sp. (strain MR-7).